The primary structure comprises 378 residues: UPF0725 protein At1g23970 (378 aa).

The protein belongs to the UPF0725 (EMB2204) family.

This Arabidopsis thaliana (Mouse-ear cress) protein is UPF0725 protein At1g23970.